The following is a 94-amino-acid chain: Large ribosomal subunit protein bL27 (94 aa).

Residues 1 to 25 (MAHKKGTGSTRNGRDSQSKRLGVKR) form a disordered region.

The protein belongs to the bacterial ribosomal protein bL27 family.

This chain is Large ribosomal subunit protein bL27, found in Gloeothece citriformis (strain PCC 7424) (Cyanothece sp. (strain PCC 7424)).